The chain runs to 355 residues: N-acetyl-gamma-glutamyl-phosphate reductase (355 aa).

Cys152 is a catalytic residue.

It belongs to the NAGSA dehydrogenase family. Type 1 subfamily.

The protein resides in the cytoplasm. The enzyme catalyses N-acetyl-L-glutamate 5-semialdehyde + phosphate + NADP(+) = N-acetyl-L-glutamyl 5-phosphate + NADPH + H(+). It participates in amino-acid biosynthesis; L-arginine biosynthesis; N(2)-acetyl-L-ornithine from L-glutamate: step 3/4. Its function is as follows. Catalyzes the NADPH-dependent reduction of N-acetyl-5-glutamyl phosphate to yield N-acetyl-L-glutamate 5-semialdehyde. This is N-acetyl-gamma-glutamyl-phosphate reductase from Psychrobacter cryohalolentis (strain ATCC BAA-1226 / DSM 17306 / VKM B-2378 / K5).